We begin with the raw amino-acid sequence, 701 residues long: Elongation factor G (701 aa).

In terms of domain architecture, tr-type G spans E8 to T290. Residues A17 to T24, D88 to H92, and N142 to D145 contribute to the GTP site.

The protein belongs to the TRAFAC class translation factor GTPase superfamily. Classic translation factor GTPase family. EF-G/EF-2 subfamily.

Its subcellular location is the cytoplasm. In terms of biological role, catalyzes the GTP-dependent ribosomal translocation step during translation elongation. During this step, the ribosome changes from the pre-translocational (PRE) to the post-translocational (POST) state as the newly formed A-site-bound peptidyl-tRNA and P-site-bound deacylated tRNA move to the P and E sites, respectively. Catalyzes the coordinated movement of the two tRNA molecules, the mRNA and conformational changes in the ribosome. The protein is Elongation factor G of Aeromonas hydrophila subsp. hydrophila (strain ATCC 7966 / DSM 30187 / BCRC 13018 / CCUG 14551 / JCM 1027 / KCTC 2358 / NCIMB 9240 / NCTC 8049).